The chain runs to 401 residues: Propionate kinase (401 aa).

ATP-binding residues include asparagine 11 and lysine 18. Asparagine 11 is a Mg(2+) binding site. Arginine 86 contacts substrate. Aspartate 143 serves as the catalytic Proton donor/acceptor. ATP contacts are provided by residues histidine 175, 203–207, 278–280, and 326–330; these read HLGNG, DLR, and GIGEN.

It belongs to the acetokinase family. TdcD subfamily. Homodimer. Mg(2+) is required as a cofactor.

It carries out the reaction propanoate + ATP = propanoyl phosphate + ADP. It participates in amino-acid degradation; L-threonine degradation via propanoate pathway; propanoate from L-threonine: step 4/4. Functionally, catalyzes the conversion of propionyl phosphate and ADP to propionate and ATP. In Klebsiella pneumoniae (strain 342), this protein is Propionate kinase.